The following is a 208-amino-acid chain: Cysteine-rich protein 2 (208 aa).

The region spanning cysteine 5–cysteine 57 is the LIM zinc-binding 1 domain. At lysine 23 the chain carries N6-acetyllysine. Residues alanine 98–phenylalanine 119 are disordered. Phosphoserine is present on serine 104. Residues cysteine 126–cysteine 178 form the LIM zinc-binding 2 domain. 2 positions are modified to N6-acetyllysine: lysine 138 and lysine 144.

As to quaternary structure, interacts with TGFB1I1.

In Pongo abelii (Sumatran orangutan), this protein is Cysteine-rich protein 2 (CRIP2).